The chain runs to 437 residues: Aspartate--tRNA(Asp/Asn) ligase (437 aa).

Glu175 lines the L-aspartate pocket. An aspartate region spans residues 197-200 (QLYK). Arg219 contributes to the L-aspartate binding site. ATP contacts are provided by residues 219–221 (RAE), 227–229 (RHL), and Glu360. Mg(2+)-binding residues include Glu360 and Ser363. 2 residues coordinate L-aspartate: Ser363 and Arg367. ATP is bound at residue 408 to 411 (GAER).

The protein belongs to the class-II aminoacyl-tRNA synthetase family. Type 2 subfamily. In terms of assembly, homodimer. Mg(2+) serves as cofactor.

The protein localises to the cytoplasm. It carries out the reaction tRNA(Asx) + L-aspartate + ATP = L-aspartyl-tRNA(Asx) + AMP + diphosphate. In terms of biological role, aspartyl-tRNA synthetase with relaxed tRNA specificity since it is able to aspartylate not only its cognate tRNA(Asp) but also tRNA(Asn). Reaction proceeds in two steps: L-aspartate is first activated by ATP to form Asp-AMP and then transferred to the acceptor end of tRNA(Asp/Asn). The sequence is that of Aspartate--tRNA(Asp/Asn) ligase from Methanothermobacter thermautotrophicus (strain ATCC 29096 / DSM 1053 / JCM 10044 / NBRC 100330 / Delta H) (Methanobacterium thermoautotrophicum).